A 463-amino-acid polypeptide reads, in one-letter code: MLKIFNTLTRQKEEFKPIHKGKIGMYVCGITIYDLCHIGHGRTFVAFDAITRYLRYLGYDVNYVRNVTDVDDKIIKRAIENNETCEQLTTRMLAEMHKDFDALNILRPDSEPRATHHIAEIIALTETLIKRGHAYVAENGDVMFAIDTDPDYGLLSRQDLEQLQAGARVEVANVKRNPMDFVLWKMSKPGEPSWTSPWGEGRPGWHIECSAMNGKELGHHFDIHGGGSDLMFPHHENEIAQSTCAHDGPYVNYWMHSGMVMVDKEKMSKSLNNFFTIRDVLAYYDAETVRYFLLSGHYRSQLNYTEENLKQARTALERLYTSLRGTDANAQPAGGEAFEAQFIEAMNDDFNTPEAYSVLFDLAREVNRLKTVNMEAANGLAAVLRKLAKVLGLLEQQPEHFLQSGAQADDADEVEKIEALIQQRNDARKNKDWAAADAARDALTAMGIVLEDGPQGTTWRRNS.

Cys28 lines the Zn(2+) pocket. The short motif at Ile30–His40 is the 'HIGH' region element. Cys209, His234, and Glu238 together coordinate Zn(2+). The 'KMSKS' region signature appears at Lys266–Ser270. Position 269 (Lys269) interacts with ATP.

This sequence belongs to the class-I aminoacyl-tRNA synthetase family. In terms of assembly, monomer. The cofactor is Zn(2+).

The protein localises to the cytoplasm. It catalyses the reaction tRNA(Cys) + L-cysteine + ATP = L-cysteinyl-tRNA(Cys) + AMP + diphosphate. This is Cysteine--tRNA ligase from Proteus mirabilis (strain HI4320).